Reading from the N-terminus, the 477-residue chain is uncharacterized protein (477 aa).

This is an uncharacterized protein from Aquifex aeolicus (strain VF5).